A 150-amino-acid polypeptide reads, in one-letter code: Large ribosomal subunit protein bL9 (150 aa).

The protein belongs to the bacterial ribosomal protein bL9 family.

Its function is as follows. Binds to the 23S rRNA. The protein is Large ribosomal subunit protein bL9 of Neisseria gonorrhoeae.